The following is a 251-amino-acid chain: Aliphatic sulfonates import ATP-binding protein SsuB (251 aa).

The 229-residue stretch at 3-231 folds into the ABC transporter domain; that stretch reads VSIDGVSKYF…PRSKTSESFQ (229 aa). Residue 39-46 coordinates ATP; the sequence is GPSGCGKS.

It belongs to the ABC transporter superfamily. Aliphatic sulfonates importer (TC 3.A.1.17.2) family. The complex is composed of two ATP-binding proteins (SsuB), two transmembrane proteins (SsuC) and a solute-binding protein (SsuA).

It localises to the cell membrane. The enzyme catalyses ATP + H2O + aliphatic sulfonate-[sulfonate-binding protein]Side 1 = ADP + phosphate + aliphatic sulfonateSide 2 + [sulfonate-binding protein]Side 1.. Part of the ABC transporter complex SsuABC involved in aliphatic sulfonates import. Responsible for energy coupling to the transport system. This Bacillus cereus (strain ATCC 10987 / NRS 248) protein is Aliphatic sulfonates import ATP-binding protein SsuB.